Reading from the N-terminus, the 480-residue chain is Probable histone deacetylase 1-B (480 aa).

A histone deacetylase region spans residues 10–321; it reads KVCYYYDGDV…WTYETAVALD (312 aa). His141 is a catalytic residue. A disordered region spans residues 387–480; sequence DSVHDDSGEE…KRVKEETKSV (94 aa). Over residues 401–416 the composition is skewed to basic and acidic residues; the sequence is PDKRISIRSSDKRIAC. Residues 417–427 are compositionally biased toward acidic residues; the sequence is DEEFSDSEDEG. The span at 443–480 shows a compositional bias: basic and acidic residues; the sequence is VKTEEEKEGEDKKDVKEEEKAKDEKTDSKRVKEETKSV.

The protein belongs to the histone deacetylase family. HD type 1 subfamily. Found in a large complex with RBBP4 and MI-2.

It is found in the nucleus. The protein localises to the cytoplasm. It carries out the reaction N(6)-acetyl-L-lysyl-[histone] + H2O = L-lysyl-[histone] + acetate. It catalyses the reaction N(6)-acetyl-L-lysyl-[protein] + H2O = L-lysyl-[protein] + acetate. The catalysed reaction is N(6)-(2E)-butenoyl-L-lysyl-[protein] + H2O = (2E)-2-butenoate + L-lysyl-[protein]. Its function is as follows. Histone deacetylase that catalyzes the deacetylation of lysine residues on the N-terminal part of the core histones (H2A, H2B, H3 and H4). Histone deacetylation gives a tag for epigenetic repression and plays an important role in transcriptional regulation, cell cycle progression and developmental events. Histone deacetylases act via the formation of large multiprotein complexes. Also functions as a deacetylase for non-histone proteins. In addition to protein deacetylase activity, also has protein-lysine deacylase activity: acts as a protein decrotonylase by mediating decrotonylation ((2E)-butenoyl) of histones. The polypeptide is Probable histone deacetylase 1-B (hdac1-b) (Xenopus laevis (African clawed frog)).